The chain runs to 499 residues: Catalase (499 aa).

The interval 1–25 (MTDRPIMTTSAGAPIPDNQNSLTAG) is disordered. A compositionally biased stretch (polar residues) spans 7 to 23 (MTTSAGAPIPDNQNSLT). Residues His55 and Asn127 contribute to the active site. Residue Tyr337 coordinates heme.

This sequence belongs to the catalase family. Homotetramer. Requires heme as cofactor.

The protein resides in the periplasm. The enzyme catalyses 2 H2O2 = O2 + 2 H2O. In terms of biological role, decomposes hydrogen peroxide into water and oxygen; serves to protect cells from the toxic effects of hydrogen peroxide. The polypeptide is Catalase (katA) (Brucella abortus biovar 1 (strain 9-941)).